The primary structure comprises 587 residues: Synaptotagmin-3 (587 aa).

Residues 1–54 (MSGDYEDDLCRRALILVSDLCARVRDADTNDRCQEFNELRIRGYPRGPDADISV) are Vesicular-facing. The segment at 10–34 (CRRALILVSDLCARVRDADTNDRCQ) is cysteine motif. The helical transmembrane segment at 55–75 (SLLSVIVTFCGIVLLGVSLFV) threads the bilayer. The Cytoplasmic segment spans residues 76 to 587 (SWKLCWVPWR…KGLSEKENSE (512 aa)). The span at 183 to 205 (PSQTSPELPSEGGTGSGLLLLPP) shows a compositional bias: low complexity. The segment at 183 to 258 (PSQTSPELPS…EERPPALPLP (76 aa)) is disordered. The span at 213–224 (AQSHQQVTSLAP) shows a compositional bias: polar residues. A compositionally biased stretch (low complexity) spans 229-244 (PALPRPLTQQTLTTQA). Residue Arg286 is modified to Omega-N-methylarginine. C2 domains lie at 296 to 417 (PCGR…PLWR) and 428 to 562 (DLGE…EHWH). The Ca(2+) site is built by Asp327, Asp333, Asp385, Phe386, Asp387, Ser390, Asp393, Asp459, Asp465, Asp519, and Asp521.

This sequence belongs to the synaptotagmin family. Homodimer; disulfide-linked via the cysteine motif. Can also form heterodimers with SYT6, SYT9 and SYT10. It depends on Ca(2+) as a cofactor.

It is found in the cell membrane. Its subcellular location is the cytoplasmic vesicle. It localises to the secretory vesicle membrane. In terms of biological role, ca(2+) sensor involved in Ca(2+)-dependent exocytosis of secretory vesicles through Ca(2+) and phospholipid binding to the C2 domain. Ca(2+) induces binding of the C2-domains to phospholipid membranes and to assembled SNARE-complexes; both actions contribute to triggering exocytosis. Plays a role in dendrite formation by melanocytes. The sequence is that of Synaptotagmin-3 (Syt3) from Mus musculus (Mouse).